A 232-amino-acid polypeptide reads, in one-letter code: Ubiquinone biosynthesis O-methyltransferase (232 aa).

Positions 36, 55, 76, and 120 each coordinate S-adenosyl-L-methionine.

The protein belongs to the methyltransferase superfamily. UbiG/COQ3 family.

It carries out the reaction a 3-demethylubiquinol + S-adenosyl-L-methionine = a ubiquinol + S-adenosyl-L-homocysteine + H(+). It catalyses the reaction a 3-(all-trans-polyprenyl)benzene-1,2-diol + S-adenosyl-L-methionine = a 2-methoxy-6-(all-trans-polyprenyl)phenol + S-adenosyl-L-homocysteine + H(+). Its pathway is cofactor biosynthesis; ubiquinone biosynthesis. O-methyltransferase that catalyzes the 2 O-methylation steps in the ubiquinone biosynthetic pathway. The protein is Ubiquinone biosynthesis O-methyltransferase of Pseudomonas putida (strain W619).